The sequence spans 78 residues: Polcalcin Phl p 7 (78 aa).

EF-hand domains follow at residues 1 to 35 (MADD…LGST) and 35 to 70 (TSAD…NPGL). 9 residues coordinate Ca(2+): Asp13, Asn15, Asp17, Lys19, Glu24, Asp48, Asp50, Asp52, and Glu59.

Monomer. In terms of tissue distribution, specifically expressed in pollen.

Functionally, may be involved in the regulation of pollen-tube growth. This Phleum pratense (Common timothy) protein is Polcalcin Phl p 7.